The primary structure comprises 490 residues: Acetyl-coenzyme A carboxylase carboxyl transferase subunit beta, chloroplastic (490 aa).

Positions 228–490 constitute a CoA carboxyltransferase N-terminal domain; it reads LWVQCENCYG…FKLHAFFPLN (263 aa). Zn(2+) contacts are provided by C232, C235, C251, and C254. The C4-type zinc finger occupies 232–254; that stretch reads CENCYGLNYKKLLKSKMNICDQC.

This sequence belongs to the AccD/PCCB family. In terms of assembly, acetyl-CoA carboxylase is a heterohexamer composed of biotin carboxyl carrier protein, biotin carboxylase and 2 subunits each of ACCase subunit alpha and ACCase plastid-coded subunit beta (accD). Zn(2+) is required as a cofactor.

It is found in the plastid. The protein localises to the chloroplast stroma. It carries out the reaction N(6)-carboxybiotinyl-L-lysyl-[protein] + acetyl-CoA = N(6)-biotinyl-L-lysyl-[protein] + malonyl-CoA. Its pathway is lipid metabolism; malonyl-CoA biosynthesis; malonyl-CoA from acetyl-CoA: step 1/1. Component of the acetyl coenzyme A carboxylase (ACC) complex. Biotin carboxylase (BC) catalyzes the carboxylation of biotin on its carrier protein (BCCP) and then the CO(2) group is transferred by the transcarboxylase to acetyl-CoA to form malonyl-CoA. The chain is Acetyl-coenzyme A carboxylase carboxyl transferase subunit beta, chloroplastic from Eucalyptus globulus subsp. globulus (Tasmanian blue gum).